A 705-amino-acid polypeptide reads, in one-letter code: DNA polymerase alpha subunit B (705 aa).

The interval 115 to 199 (KKRKLHGPFS…TPTTSRQNVP (85 aa)) is disordered. Over residues 125 to 134 (LSDSKQTYNV) the composition is skewed to polar residues. Serine 126 bears the Phosphoserine mark. The segment covering 181-197 (STFQTPTTNTPTTSRQN) has biased composition (low complexity).

Belongs to the DNA polymerase alpha subunit B family. As to quaternary structure, DNA polymerase alpha:primase is a four subunit enzyme complex, which is assembled throughout the cell cycle, and consists of the two DNA polymerase subunits A POL1 and B POL12, and the DNA primase large PRI2 and small PRI1 subunits. Subunit B POL12 binds to subunit A POL1. Post-translationally, phosphorylated in a cell cycle-dependent manner.

The protein localises to the nucleus. Non-catalytic component of DNA polymerase alpha, which in a complex with DNA primase (DNA polymerase alpha:primase) constitutes a replicative polymerase. POL12 may play an essential role at the early stage of chromosomal DNA replication by coupling DNA polymerase alpha to the cellular replication machinery. Interacts with MCM10. In Saccharomyces cerevisiae (strain ATCC 204508 / S288c) (Baker's yeast), this protein is DNA polymerase alpha subunit B (POL12).